Consider the following 164-residue polypeptide: Putative 4-hydroxy-4-methyl-2-oxoglutarate aldolase (164 aa).

Residues 74-77 (GGNL) and Arg-96 contribute to the substrate site. Asp-97 serves as a coordination point for a divalent metal cation.

The protein belongs to the class II aldolase/RraA-like family. Homotrimer. A divalent metal cation serves as cofactor.

The enzyme catalyses 4-hydroxy-4-methyl-2-oxoglutarate = 2 pyruvate. It catalyses the reaction oxaloacetate + H(+) = pyruvate + CO2. In terms of biological role, catalyzes the aldol cleavage of 4-hydroxy-4-methyl-2-oxoglutarate (HMG) into 2 molecules of pyruvate. Also contains a secondary oxaloacetate (OAA) decarboxylase activity due to the common pyruvate enolate transition state formed following C-C bond cleavage in the retro-aldol and decarboxylation reactions. The polypeptide is Putative 4-hydroxy-4-methyl-2-oxoglutarate aldolase (Thermus thermophilus (strain ATCC BAA-163 / DSM 7039 / HB27)).